A 181-amino-acid chain; its full sequence is Photosystem I assembly protein Ycf4 (181 aa).

The next 2 helical transmembrane spans lie at 19-39 (YFWA…GISS) and 62-82 (VMMF…LTII).

Belongs to the Ycf4 family.

It localises to the plastid. Its subcellular location is the chloroplast thylakoid membrane. Seems to be required for the assembly of the photosystem I complex. This Phaeodactylum tricornutum (strain CCAP 1055/1) protein is Photosystem I assembly protein Ycf4.